The following is a 333-amino-acid chain: Glycerol-3-phosphate dehydrogenase [NAD(P)+] (333 aa).

NADPH-binding residues include Ser10, Trp11, and Lys105. Sn-glycerol 3-phosphate-binding residues include Lys105, Gly136, and Thr138. Position 140 (Ala140) interacts with NADPH. Sn-glycerol 3-phosphate-binding residues include Lys191, Asp244, Ser254, Arg255, and Asn256. Catalysis depends on Lys191, which acts as the Proton acceptor. Arg255 is a binding site for NADPH. The NADPH site is built by Val279 and Glu281.

This sequence belongs to the NAD-dependent glycerol-3-phosphate dehydrogenase family.

The protein resides in the cytoplasm. The catalysed reaction is sn-glycerol 3-phosphate + NAD(+) = dihydroxyacetone phosphate + NADH + H(+). It carries out the reaction sn-glycerol 3-phosphate + NADP(+) = dihydroxyacetone phosphate + NADPH + H(+). The protein operates within membrane lipid metabolism; glycerophospholipid metabolism. In terms of biological role, catalyzes the reduction of the glycolytic intermediate dihydroxyacetone phosphate (DHAP) to sn-glycerol 3-phosphate (G3P), the key precursor for phospholipid synthesis. The polypeptide is Glycerol-3-phosphate dehydrogenase [NAD(P)+] (Syntrophotalea carbinolica (strain DSM 2380 / NBRC 103641 / GraBd1) (Pelobacter carbinolicus)).